The sequence spans 231 residues: 2,3-bisphosphoglycerate-dependent phosphoglycerate mutase (231 aa).

Substrate contacts are provided by residues 10–17, 23–24, Arg62, 89–92, Lys100, 116–117, and 185–186; these read RHGQSEWN, TG, ERHY, RR, and GN. His11 (tele-phosphohistidine intermediate) is an active-site residue. Glu89 functions as the Proton donor/acceptor in the catalytic mechanism.

This sequence belongs to the phosphoglycerate mutase family. BPG-dependent PGAM subfamily. Homodimer.

The enzyme catalyses (2R)-2-phosphoglycerate = (2R)-3-phosphoglycerate. The protein operates within carbohydrate degradation; glycolysis; pyruvate from D-glyceraldehyde 3-phosphate: step 3/5. Its function is as follows. Catalyzes the interconversion of 2-phosphoglycerate and 3-phosphoglycerate. The sequence is that of 2,3-bisphosphoglycerate-dependent phosphoglycerate mutase from Buchnera aphidicola subsp. Acyrthosiphon pisum (strain APS) (Acyrthosiphon pisum symbiotic bacterium).